The following is a 137-amino-acid chain: NADH-ubiquinone oxidoreductase chain 3 (137 aa).

The next 3 membrane-spanning stretches (helical) occupy residues 6 to 26 (LFIL…LIFA), 57 to 77 (FFIF…TFPF), and 86 to 106 (IYGL…FVYE).

It belongs to the complex I subunit 3 family.

It localises to the mitochondrion membrane. It catalyses the reaction a ubiquinone + NADH + 5 H(+)(in) = a ubiquinol + NAD(+) + 4 H(+)(out). Its function is as follows. Core subunit of the mitochondrial membrane respiratory chain NADH dehydrogenase (Complex I) that is believed to belong to the minimal assembly required for catalysis. Complex I functions in the transfer of electrons from NADH to the respiratory chain. The immediate electron acceptor for the enzyme is believed to be ubiquinone. The sequence is that of NADH-ubiquinone oxidoreductase chain 3 (ND3) from Podospora anserina (strain S / ATCC MYA-4624 / DSM 980 / FGSC 10383) (Pleurage anserina).